The primary structure comprises 340 residues: Protein pelota homolog (340 aa).

Belongs to the eukaryotic release factor 1 family. Pelota subfamily. As to quaternary structure, monomer. It depends on a divalent metal cation as a cofactor.

The protein resides in the cytoplasm. May function in recognizing stalled ribosomes, interact with stem-loop structures in stalled mRNA molecules, and effect endonucleolytic cleavage of the mRNA. May play a role in the release non-functional ribosomes and degradation of damaged mRNAs. Has endoribonuclease activity. The sequence is that of Protein pelota homolog from Methanosphaerula palustris (strain ATCC BAA-1556 / DSM 19958 / E1-9c).